Here is a 377-residue protein sequence, read N- to C-terminus: MSMNHIRPWRNIERRKSRQIHVGNVPVGGDAPIAVQTMTNTLTTDIKGTIAQVQAAADAGADIVRVSVPDEASARALKEIVRESPVPIVADIHFHYKRGIEAAEAGAACLRINPGNIGDEKRVAEVIKAARDHNCSIRIGVNAGSLEKHLLEKYGEPCPDAMVESGLDHIKILQDHDFHEFKISVKASDVFMSAAAYQMLADATDAPIHLGITEAGGLMSGTIKSAIGLGQLLWMGIGDTLRVSLSADPVEEVKVGFEILKSLGLRHRGVNIISCPSCARQGFDVIKTVETLEERLEHIKTPMSLSIIGCVVNGPGEALMTDVGFTGGGAGSGMVYLAGKASHKMSNDQMIDHIVEEVEKKAAALDAQAAEDMKAAE.

[4Fe-4S] cluster is bound by residues Cys-275, Cys-278, Cys-310, and Glu-317.

This sequence belongs to the IspG family. [4Fe-4S] cluster serves as cofactor.

The catalysed reaction is (2E)-4-hydroxy-3-methylbut-2-enyl diphosphate + oxidized [flavodoxin] + H2O + 2 H(+) = 2-C-methyl-D-erythritol 2,4-cyclic diphosphate + reduced [flavodoxin]. Its pathway is isoprenoid biosynthesis; isopentenyl diphosphate biosynthesis via DXP pathway; isopentenyl diphosphate from 1-deoxy-D-xylulose 5-phosphate: step 5/6. In terms of biological role, converts 2C-methyl-D-erythritol 2,4-cyclodiphosphate (ME-2,4cPP) into 1-hydroxy-2-methyl-2-(E)-butenyl 4-diphosphate. The chain is 4-hydroxy-3-methylbut-2-en-1-yl diphosphate synthase (flavodoxin) from Ruegeria sp. (strain TM1040) (Silicibacter sp.).